The chain runs to 651 residues: LEAF RUST 10 DISEASE-RESISTANCE LOCUS RECEPTOR-LIKE PROTEIN KINASE-like 1.2 (651 aa).

The N-terminal stretch at 1-26 (MNPSTPSLLYTSIFFYFTIIATQTLS) is a signal peptide. Topologically, residues 27–264 (LDPKFKACEP…NDKRRRVIVK (238 aa)) are extracellular. Asparagine 88, asparagine 114, asparagine 130, asparagine 136, asparagine 155, asparagine 193, and asparagine 213 each carry an N-linked (GlcNAc...) asparagine glycan. A helical transmembrane segment spans residues 265-285 (VLIGASAAVVGLIAASIFWYV). Residues 286–651 (YHRRKTKSYR…DSVIVKWDSK (366 aa)) lie on the Cytoplasmic side of the membrane. Residues 341 to 613 (FDPSKELGDG…PCMSHVQDTL (273 aa)) form the Protein kinase domain. Residues 347 to 355 (LGDGGFGTV) and lysine 369 each bind ATP. At tyrosine 415 the chain carries Phosphotyrosine. The active-site Proton acceptor is aspartate 465. A Phosphoserine modification is found at serine 498. Phosphothreonine is present on residues threonine 499 and threonine 504. Tyrosine 512 bears the Phosphotyrosine mark.

Belongs to the protein kinase superfamily. Ser/Thr protein kinase family.

It localises to the cell membrane. The protein resides in the membrane. It catalyses the reaction L-seryl-[protein] + ATP = O-phospho-L-seryl-[protein] + ADP + H(+). The enzyme catalyses L-threonyl-[protein] + ATP = O-phospho-L-threonyl-[protein] + ADP + H(+). Probable receptor-like serine/threonine-protein kinase involved in abscisic acid (ABA) signaling. Acts as a positive regulator of abiotic stress response. The sequence is that of LEAF RUST 10 DISEASE-RESISTANCE LOCUS RECEPTOR-LIKE PROTEIN KINASE-like 1.2 from Arabidopsis thaliana (Mouse-ear cress).